We begin with the raw amino-acid sequence, 365 residues long: Peptide chain release factor 2 (365 aa).

An N5-methylglutamine modification is found at glutamine 252.

Belongs to the prokaryotic/mitochondrial release factor family. In terms of processing, methylated by PrmC. Methylation increases the termination efficiency of RF2.

It localises to the cytoplasm. Its function is as follows. Peptide chain release factor 2 directs the termination of translation in response to the peptide chain termination codons UGA and UAA. The protein is Peptide chain release factor 2 of Proteus mirabilis (strain HI4320).